We begin with the raw amino-acid sequence, 219 residues long: 7-cyano-7-deazaguanine synthase (219 aa).

Residue 11 to 21 (FSGGQDSTTCL) coordinates ATP. Zn(2+) is bound by residues Cys188, Cys196, Cys199, and Cys202.

Belongs to the QueC family. Zn(2+) is required as a cofactor.

The catalysed reaction is 7-carboxy-7-deazaguanine + NH4(+) + ATP = 7-cyano-7-deazaguanine + ADP + phosphate + H2O + H(+). It participates in purine metabolism; 7-cyano-7-deazaguanine biosynthesis. In terms of biological role, catalyzes the ATP-dependent conversion of 7-carboxy-7-deazaguanine (CDG) to 7-cyano-7-deazaguanine (preQ(0)). The sequence is that of 7-cyano-7-deazaguanine synthase from Glaesserella parasuis serovar 5 (strain SH0165) (Haemophilus parasuis).